The following is a 284-amino-acid chain: Citrate lyase subunit beta-like protein (284 aa).

Substrate is bound by residues R74 and E129. Mg(2+)-binding residues include E129 and D155.

It belongs to the HpcH/HpaI aldolase family. Citrate lyase beta subunit-like subfamily. As to quaternary structure, homotrimer. Mg(2+) serves as cofactor.

Its function is as follows. May play a role in fatty acid biosynthesis. This is Citrate lyase subunit beta-like protein from Deinococcus radiodurans (strain ATCC 13939 / DSM 20539 / JCM 16871 / CCUG 27074 / LMG 4051 / NBRC 15346 / NCIMB 9279 / VKM B-1422 / R1).